Consider the following 367-residue polypeptide: Molybdenum import ATP-binding protein ModC (367 aa).

The ABC transporter domain maps to 1–234; sequence MSSAALEVRL…PALSGGFGHE (234 aa). 33–40 provides a ligand contact to ATP; that stretch reads GPSGAGKS. A Mop domain is found at 293-366; the sequence is HISLHNILPV…IKSVAVDVLG (74 aa).

Belongs to the ABC transporter superfamily. Molybdate importer (TC 3.A.1.8) family. In terms of assembly, the complex is composed of two ATP-binding proteins (ModC), two transmembrane proteins (ModB) and a solute-binding protein (ModA).

The protein localises to the cell inner membrane. The catalysed reaction is molybdate(out) + ATP + H2O = molybdate(in) + ADP + phosphate + H(+). In terms of biological role, part of the ABC transporter complex ModABC involved in molybdenum import. Responsible for energy coupling to the transport system. This is Molybdenum import ATP-binding protein ModC from Granulibacter bethesdensis (strain ATCC BAA-1260 / CGDNIH1).